The primary structure comprises 483 residues: Bromoperoxidase-catalase (483 aa).

Positions 1–24 are disordered; sequence MTQGPLTTEAGAPVADNQNSETAG. Residues H54 and N127 contribute to the active site. Heme is bound at residue Y337.

This sequence belongs to the catalase family.

The catalysed reaction is 2 H2O2 = O2 + 2 H2O. This Streptomyces venezuelae (strain ATCC 10712 / CBS 650.69 / DSM 40230 / JCM 4526 / NBRC 13096 / PD 04745) protein is Bromoperoxidase-catalase (bca).